The sequence spans 956 residues: Pyruvate, phosphate dikinase, chloroplastic (956 aa).

A chloroplast-targeting transit peptide spans 1–79 (MMSSLFVEGM…AVLNPVSPPV (79 aa)). Thr-536 carries the post-translational modification Phosphothreonine; by PDRP1. Catalysis depends on His-538, which acts as the Tele-phosphohistidine intermediate. Positions 644, 701, 830, 851, 852, 853, and 854 each coordinate substrate. A Mg(2+)-binding site is contributed by Glu-830. A Mg(2+)-binding site is contributed by Asp-854. Cys-916 serves as the catalytic Proton donor.

It belongs to the PEP-utilizing enzyme family. Homotetramer. It depends on Mg(2+) as a cofactor. In terms of processing, phosphorylation of Thr-536 in the dark inactivates the enzyme. Dephosphorylation upon light stimulation reactivates the enzyme.

The protein localises to the plastid. It is found in the chloroplast. The enzyme catalyses pyruvate + phosphate + ATP = phosphoenolpyruvate + AMP + diphosphate + H(+). Its activity is regulated as follows. Activated by light-induced dephosphorylation. Inhibited by dark-induced phosphorylation. Both reactions are catalyzed by PDRP1. Functionally, formation of phosphoenolpyruvate. In Flaveria pringlei, this protein is Pyruvate, phosphate dikinase, chloroplastic (PPDK).